The following is a 458-amino-acid chain: 5-hydroxytryptamine receptor 2C (458 aa).

Residues 1-32 form the signal peptide; that stretch reads MVNLRKAVHSFLVHLIGLLVWQCDISVSPVAA. Residues 33–55 lie on the Extracellular side of the membrane; it reads LVTDIFNTSDGGRFKFPDGVQNW. The helical transmembrane segment at 56–80 threads the bilayer; sequence PALSIVIIIILTIGGNILVIMAVSL. Residues 81–86 are Cytoplasmic-facing; it reads EKKLHN. A helical membrane pass occupies residues 87–111; that stretch reads ATNYFLMSLAIADMLVGLLVMPLSL. At 112-128 the chain is on the extracellular side; it reads LAILYDYVWPLPRYLCP. Residues Cys-127 and Cys-207 are joined by a disulfide bond. A helical membrane pass occupies residues 129–151; that stretch reads VWISLDVLFSTASIMHLCAISLD. Thr-139 contacts ergotamine. Positions 151-153 match the DRY motif; important for ligand-induced conformation changes motif; that stretch reads DRY. Residues 152 to 167 lie on the Cytoplasmic side of the membrane; it reads RYVAIRNPVEHSRFNS. A helical transmembrane segment spans residues 168 to 189; sequence RTKAIMKIAIVWAISIGVSVPI. Over 190-213 the chain is Extracellular; it reads PVIGLRDEEKVFVNNTTCVLNDPN. N-linked (GlcNAc...) asparagine glycosylation is found at Asn-203 and Asn-204. Leu-209 serves as a coordination point for ergotamine. The helical transmembrane segment at 214 to 236 threads the bilayer; it reads FVLIGSFVAFFIPLTIMVITYCL. Residues 237–311 lie on the Cytoplasmic side of the membrane; that stretch reads TIHVLRRQAL…AINNERKASK (75 aa). The disordered stretch occupies residues 272–301; that stretch reads TEEENSANPNQDSNPRRRKKKERRPRGTMQ. Basic residues predominate over residues 287 to 297; the sequence is RRRKKKERRPR. A helical membrane pass occupies residues 312 to 336; the sequence is VLGIVFFVFLVMWCPFFITNILSVL. Cys-337 and Cys-341 are joined by a disulfide. Topologically, residues 337 to 347 are extracellular; it reads CGKACNQKLME. Residues 348-370 traverse the membrane as a helical segment; it reads KLLNVFVWIGYVCSGINPLVYTL. The short motif at 364-368 is the NPxxY motif; important for ligand-induced conformation changes and signaling element; that stretch reads NPLVY. The Cytoplasmic portion of the chain corresponds to 371 to 458; it reads FNKIYRRAFS…SVVSERISSV (88 aa). The PDZ-binding motif lies at 456-458; the sequence is SSV.

Belongs to the G-protein coupled receptor 1 family. As to quaternary structure, interacts with MPDZ. Interacts with ARRB2. Interacts with MPP3; this interaction stabilizes the receptor at the plasma membrane and prevents the desensitization of the HTR2C receptor-mediated calcium response.

Its subcellular location is the cell membrane. Functionally, G-protein coupled receptor for 5-hydroxytryptamine (serotonin). Also functions as a receptor for various drugs and psychoactive substances, including ergot alkaloid derivatives, 1-2,5,-dimethoxy-4-iodophenyl-2-aminopropane (DOI) and lysergic acid diethylamide (LSD). Ligand binding causes a conformation change that triggers signaling via guanine nucleotide-binding proteins (G proteins) and modulates the activity of downstream effectors. HTR2C is coupled to G(q)/G(11) G alpha proteins and activates phospholipase C-beta, releasing diacylglycerol (DAG) and inositol 1,4,5-trisphosphate (IP3) second messengers that modulate the activity of phosphatidylinositol 3-kinase and promote the release of Ca(2+) ions from intracellular stores, respectively. Beta-arrestin family members inhibit signaling via G proteins and mediate activation of alternative signaling pathways. Regulates neuronal activity via the activation of short transient receptor potential calcium channels in the brain, and thereby modulates the activation of pro-opiomelanocortin neurons and the release of CRH that then regulates the release of corticosterone. Plays a role in the regulation of appetite and eating behavior, responses to anxiogenic stimuli and stress. Plays a role in insulin sensitivity and glucose homeostasis. The chain is 5-hydroxytryptamine receptor 2C from Canis lupus familiaris (Dog).